The following is a 463-amino-acid chain: Ribosomal protein uS12 methylthiotransferase RimO (463 aa).

Residues 15–130 (PKVGMVSLGC…VMQAVHSHLP (116 aa)) form the MTTase N-terminal domain. Positions 24, 60, 89, 161, 165, and 168 each coordinate [4Fe-4S] cluster. Residues 147–392 (LTPRHYAYLK…MEVAEEVSAA (246 aa)) form the Radical SAM core domain. Positions 395 to 463 (ARKIGKTLKV…ADGHDLWGEV (69 aa)) constitute a TRAM domain.

This sequence belongs to the methylthiotransferase family. RimO subfamily. [4Fe-4S] cluster is required as a cofactor.

The protein localises to the cytoplasm. It carries out the reaction L-aspartate(89)-[ribosomal protein uS12]-hydrogen + (sulfur carrier)-SH + AH2 + 2 S-adenosyl-L-methionine = 3-methylsulfanyl-L-aspartate(89)-[ribosomal protein uS12]-hydrogen + (sulfur carrier)-H + 5'-deoxyadenosine + L-methionine + A + S-adenosyl-L-homocysteine + 2 H(+). Functionally, catalyzes the methylthiolation of an aspartic acid residue of ribosomal protein uS12. This is Ribosomal protein uS12 methylthiotransferase RimO from Burkholderia mallei (strain NCTC 10229).